Reading from the N-terminus, the 744-residue chain is Polyribonucleotide nucleotidyltransferase (744 aa).

Mg(2+)-binding residues include Asp-487 and Asp-493. The KH domain maps to 554 to 613 (PSTTTLKVDKDKIRDIIGPGGKVIKEICETSGAKIDISDDGTVSIYASDKDKLKVALDKV). The region spanning 623 to 691 (GEVFNGTVMK…NKGKAKLTIK (69 aa)) is the S1 motif domain. The interval 691–744 (KNAEKDKSSANPKPKNSPKEHQEPEKRDNGKKRAWNEDNNAETTEVVTERKYFS) is disordered. Basic and acidic residues predominate over residues 707-718 (SPKEHQEPEKRD). Positions 727-736 (EDNNAETTEV) are enriched in polar residues.

This sequence belongs to the polyribonucleotide nucleotidyltransferase family. Mg(2+) serves as cofactor.

The protein resides in the cytoplasm. The catalysed reaction is RNA(n+1) + phosphate = RNA(n) + a ribonucleoside 5'-diphosphate. Its function is as follows. Involved in mRNA degradation. Catalyzes the phosphorolysis of single-stranded polyribonucleotides processively in the 3'- to 5'-direction. The protein is Polyribonucleotide nucleotidyltransferase of Rickettsia bellii (strain OSU 85-389).